A 380-amino-acid chain; its full sequence is 4-hydroxy-tetrahydrodipicolinate synthase, chloroplastic (380 aa).

Positions 1 to 44 (MISPTNLLPARKITPVSNGGAATASPSSPSVAARPRRLPSGLQS) are disordered. The transit peptide at 1–54 (MISPTNLLPARKITPVSNGGAATASPSSPSVAARPRRLPSGLQSVTGRGKVSLA) directs the protein to the chloroplast. The span at 21–33 (AATASPSSPSVAA) shows a compositional bias: low complexity. Threonine 123 contacts pyruvate. Residue tyrosine 209 is the Proton donor/acceptor of the active site. Lysine 237 functions as the Schiff-base intermediate with substrate in the catalytic mechanism. Residue isoleucine 276 participates in pyruvate binding.

This sequence belongs to the DapA family. Tetramer of modified subunits derived from two genes in different combinations.

It localises to the plastid. It is found in the chloroplast. The catalysed reaction is L-aspartate 4-semialdehyde + pyruvate = (2S,4S)-4-hydroxy-2,3,4,5-tetrahydrodipicolinate + H2O + H(+). The protein operates within amino-acid biosynthesis; L-lysine biosynthesis via DAP pathway; (S)-tetrahydrodipicolinate from L-aspartate: step 3/4. With respect to regulation, sensitive to lysine inhibition. This inhibition increase in an allosteric manner with increasing concentration of the inhibitor. Functionally, catalyzes the condensation of (S)-aspartate-beta-semialdehyde [(S)-ASA] and pyruvate to 4-hydroxy-tetrahydrodipicolinate (HTPA). The protein is 4-hydroxy-tetrahydrodipicolinate synthase, chloroplastic of Zea mays (Maize).